A 271-amino-acid chain; its full sequence is MPELPEVEVTRLSFAERIAGARIEAVLVGKPLRWPLGCETQQLQGQRVLAVRRRGKYLLLDLSEGLLLMHLGMSGSVSFGLNLPVTGKHDHFDMVTSLGTLRLHDPRRFGAVVYASGEDDAVAKKLLGRLGVEPLSDAFDALVFHQWLKGRKTAIKPLLLAGQAVVGVGNIYASEALFLAGIRPTTKASLISKPRAARLHRAIQDVLTNAVAKGGSTLRDFSNADGEAGHFQLDAMVYDRAGLPCRVCAAPIKSIRQGQRSSFYCATCQKP.

Residue P2 is the Schiff-base intermediate with DNA of the active site. E3 (proton donor) is an active-site residue. K56 serves as the catalytic Proton donor; for beta-elimination activity. H89, R107, and R151 together coordinate DNA. An FPG-type zinc finger spans residues 236–270; sequence MVYDRAGLPCRVCAAPIKSIRQGQRSSFYCATCQK. Catalysis depends on R260, which acts as the Proton donor; for delta-elimination activity.

Belongs to the FPG family. As to quaternary structure, monomer. Zn(2+) serves as cofactor.

It carries out the reaction Hydrolysis of DNA containing ring-opened 7-methylguanine residues, releasing 2,6-diamino-4-hydroxy-5-(N-methyl)formamidopyrimidine.. The catalysed reaction is 2'-deoxyribonucleotide-(2'-deoxyribose 5'-phosphate)-2'-deoxyribonucleotide-DNA = a 3'-end 2'-deoxyribonucleotide-(2,3-dehydro-2,3-deoxyribose 5'-phosphate)-DNA + a 5'-end 5'-phospho-2'-deoxyribonucleoside-DNA + H(+). Its function is as follows. Involved in base excision repair of DNA damaged by oxidation or by mutagenic agents. Acts as a DNA glycosylase that recognizes and removes damaged bases. Has a preference for oxidized purines, such as 7,8-dihydro-8-oxoguanine (8-oxoG). Has AP (apurinic/apyrimidinic) lyase activity and introduces nicks in the DNA strand. Cleaves the DNA backbone by beta-delta elimination to generate a single-strand break at the site of the removed base with both 3'- and 5'-phosphates. The sequence is that of Formamidopyrimidine-DNA glycosylase from Polaromonas naphthalenivorans (strain CJ2).